A 145-amino-acid chain; its full sequence is MNFKYIVAVSFLIASAYARSVQNDEQSLSQRDVLEEEESLREIRGIGGKILSGLKTALKGAAKELASTYLHRKRTAEEHEVMKRLEAVMRDLDSLDYPEEAAERETRGFNQDEIANLFTKKEKRILGPVLGLVGNALGGLIKKIG.

The first 18 residues, 1 to 18, serve as a signal peptide directing secretion; sequence MNFKYIVAVSFLIASAYA. 2 propeptides span residues 19–43 and 74–124; these read RSVQ…LREI and RTAE…KEKR. An Isoleucine amide modification is found at Ile144.

The protein belongs to the bombinin family. In terms of tissue distribution, expressed by the skin glands.

Its subcellular location is the secreted. Functionally, maximin-3 shows antibacterial activity against both Gram-positive and Gram-negative bacteria. It also shows antimicrobial activity against the fungus C.albicans, but not against A.flavus nor P.uticale. It has little hemolytic activity. It possess a significant cytotoxicity against tumor cell lines. It possess a significant anti-HIV activity. It shows high spermicidal activity. Its function is as follows. Maximin-H3 shows antibacterial activity against both Gram-positive and Gram-negative bacteria. It also shows antimicrobial activity against the fungus C.albicans. Shows strong hemolytic activity. The polypeptide is Maximins 3/H3 type 2 (Bombina maxima (Giant fire-bellied toad)).